Consider the following 140-residue polypeptide: Nucleoside diphosphate kinase (140 aa).

The ATP site is built by lysine 11, phenylalanine 59, arginine 87, threonine 93, arginine 104, and asparagine 114. The Pros-phosphohistidine intermediate role is filled by histidine 117.

The protein belongs to the NDK family. Homotetramer. Mg(2+) is required as a cofactor.

The protein resides in the cytoplasm. It catalyses the reaction a 2'-deoxyribonucleoside 5'-diphosphate + ATP = a 2'-deoxyribonucleoside 5'-triphosphate + ADP. It carries out the reaction a ribonucleoside 5'-diphosphate + ATP = a ribonucleoside 5'-triphosphate + ADP. In terms of biological role, major role in the synthesis of nucleoside triphosphates other than ATP. The ATP gamma phosphate is transferred to the NDP beta phosphate via a ping-pong mechanism, using a phosphorylated active-site intermediate. The chain is Nucleoside diphosphate kinase from Brucella anthropi (strain ATCC 49188 / DSM 6882 / CCUG 24695 / JCM 21032 / LMG 3331 / NBRC 15819 / NCTC 12168 / Alc 37) (Ochrobactrum anthropi).